A 1028-amino-acid chain; its full sequence is MESALTARDRVGVQDFVLLENYTSEAAFIENLRKRFKENLIYTYIGSVLVSVNPYKELEIYSKQHMERYRGVSFYEVSPHIYAIADNSYRSLRTERKDQCILISGESGAGKTEASKKILQYYAVTCPVSDQVETVKDRLLQSNPVLEAFGNAKTLRNDNSSRFGKYMDVQFDYKGAPVGGHILNYLLEKSRVVHQNHGERNFHIFYQLLEGGEEDLLRRLGLDKNAQNYQYLIKGQCARVSSINDKNDWKVVRRALSIINFNDDDIEELLSIVASVLHLGNVQFATDEHGHAQVTTENQIKYLARLLSVDSTVLRESLIHKKIIAKGEELNSPLNLEQAAYARDALAKAIYGRTFSWLVSKINKSLAYKGTDMHKLGSASVIGLLDIYGFEVFQHNSFEQFCINFCNEKLQQLFIELTLKSEQDEYESEGIAWEPVQYFNNKIICDLVEEKFKGIISILDEECLRPGEATDMTFLEKLEDTVKNHPHFVTHKLGDQKTRKVLGRDEFRLLHYAGEVNYSVAGFLDKNNDLLFRNLKEVMCDSGNPIAHQCFNRSELTDKKRPETAATQFKNSLSKLMEILMSKQPSYVRCIKPNDAKQPARFDEVLIRHQVKYLGLIENVRVRRAGFAYRRKYEIFLQRYKSLCPDTWPNWDGRAMDGVAVLVKSLGYKPEEYKMGRTKIFIRFPKTLFATEDALEVRKHSIATFLQARWRGYHQRQKFLHMKHSAVEIQSWWRGTIGRRKAAKRKWAVDVVRRFIKGFIYRNQPRCTENEYFLDYIRYSFLMTLYRNQPKSVLDKSWPVPPPSLREASELLREMCMNNMVWKYCRRINPEWKQQLEQKVVASEIFKDKKDNYPQSVPRLFINTRLGNDEINTKILQQLESQTLTYAVPVVKYDRKGYKPRRRQLLLTQNAAYLVEEAKMKQRIDYANLTGISVSSLSDNLFVLHVKCEDNKQKGDAILQSDHVIETLTKVAITAEKINNININQGSIKFTVGPGKEGIIDFTAGSELLIAKAKNGHLSVVAPRLNSR.

Methionine 1 carries the post-translational modification N-acetylmethionine. Positions 12-696 (GVQDFVLLEN…TLFATEDALE (685 aa)) constitute a Myosin motor domain. ATP is bound by residues asparagine 53, tyrosine 61, 104–113 (SGESGAGKTE), and 157–161 (NDNSS). Lysine 348 is modified (N6-methyllysine). Residues 573 to 595 (LSKLMEILMSKQPSYVRCIKPND) form an actin-binding region. IQ domains lie at 699–728 (KHSIATFLQARWRGYHQRQKFLHMKHSAVE) and 722–751 (MKHSAVEIQSWWRGTIGRRKAAKRKWAVDV). One can recognise a TH1 domain in the interval 850–1024 (KDNYPQSVPR…NGHLSVVAPR (175 aa)).

The protein belongs to the TRAFAC class myosin-kinesin ATPase superfamily. Myosin family. In terms of assembly, interacts (via its IQ motifs) with calmodulin. In terms of tissue distribution, expressed in brain and the sacculus of the internal ear.

Its subcellular location is the cytoplasm. It localises to the cell membrane. It is found in the cell projection. The protein localises to the ruffle membrane. The protein resides in the cytoplasmic vesicle. Its subcellular location is the stereocilium membrane. Myosins are actin-based motor molecules with ATPase activity. Unconventional myosins serve in intracellular movements. Their highly divergent tails are presumed to bind to membranous compartments, which would be moved relative to actin filaments. In Aquarana catesbeiana (American bullfrog), this protein is Unconventional myosin-Ic (Myo1c).